The chain runs to 416 residues: Isobutyryl-CoA dehydrogenase, mitochondrial (416 aa).

Residues M1–L21 constitute a mitochondrion transit peptide. FAD is bound by residues Y156 to S165 and F189 to S191. S165 is a substrate binding site. N273–R276 contacts substrate. FAD is bound by residues R301, F311–Q312, and Q370–G374. E397 serves as the catalytic Proton acceptor. S399–A401 is an FAD binding site. A substrate-binding site is contributed by R409.

It belongs to the acyl-CoA dehydrogenase family. Homotetramer. It depends on FAD as a cofactor.

The protein localises to the mitochondrion. The enzyme catalyses 2-methylpropanoyl-CoA + oxidized [electron-transfer flavoprotein] + H(+) = 2-methylpropenoyl-CoA + reduced [electron-transfer flavoprotein]. It carries out the reaction (2S)-2-methylbutanoyl-CoA + oxidized [electron-transfer flavoprotein] + H(+) = (2E)-2-methylbut-2-enoyl-CoA + reduced [electron-transfer flavoprotein]. The catalysed reaction is propanoyl-CoA + oxidized [electron-transfer flavoprotein] + H(+) = acryloyl-CoA + reduced [electron-transfer flavoprotein]. It participates in amino-acid degradation; L-valine degradation. Functionally, isobutyryl-CoA dehydrogenase which catalyzes one of the steps of the valine catabolic pathway. To a lesser extent, is also able to catalyze the oxidation of (2S)-2-methylbutanoyl-CoA. This Dictyostelium discoideum (Social amoeba) protein is Isobutyryl-CoA dehydrogenase, mitochondrial (acad8).